Reading from the N-terminus, the 345-residue chain is RING finger protein 228 (345 aa).

Low complexity predominate over residues 1–21 (MAAPASDSGGSQQSPSSSPGS). A disordered region spans residues 1–43 (MAAPASDSGGSQQSPSSSPGSREGAGVAAKGAPDCGDAGARDA). The RING-type zinc finger occupies 58–125 (CKICYNYFDA…PGAIACPVCR (68 aa)). The tract at residues 159–213 (LPQDRLPPLPARLPAPAAAPPPTPAPPPPPSPAPPQPPPPPPAEDAAPGPRARPG) is disordered. Residues 163 to 201 (RLPPLPARLPAPAAAPPPTPAPPPPPSPAPPQPPPPPPA) show a composition bias toward pro residues. Over residues 202 to 213 (EDAAPGPRARPG) the composition is skewed to low complexity. A run of 2 helical transmembrane segments spans residues 236-256 (VCVVFSFLSMVVLLFTGLIFV) and 290-310 (LSVASILALFSVVVTWVICWL). A disordered region spans residues 319–345 (AGSTGGSGGGGGPRARAAAGGARRSDT). Residues 321-331 (STGGSGGGGGP) show a composition bias toward gly residues. Residues 332 to 345 (RARAAAGGARRSDT) show a composition bias toward low complexity.

The protein localises to the membrane. This chain is RING finger protein 228, found in Homo sapiens (Human).